The chain runs to 1295 residues: Phosphoribosylformylglycinamidine synthase (1295 aa).

Residues 305-327 are disordered; the sequence is WPGAATGSGGEIRDEGATGRGAK. ATP is bound by residues 307-318 and Ala678; that span reads GAATGSGGEIRD. Residues Glu718, Asn722, and Asp884 each contribute to the Mg(2+) site. Residue Ser886 coordinates ATP. One can recognise a Glutamine amidotransferase type-1 domain in the interval 1042 to 1295; the sequence is VAVLREQGVN…IFRNARKQLG (254 aa). Residue Cys1135 is the Nucleophile of the active site. Active-site residues include His1260 and Glu1262.

In the N-terminal section; belongs to the FGAMS family. Monomer.

It is found in the cytoplasm. It catalyses the reaction N(2)-formyl-N(1)-(5-phospho-beta-D-ribosyl)glycinamide + L-glutamine + ATP + H2O = 2-formamido-N(1)-(5-O-phospho-beta-D-ribosyl)acetamidine + L-glutamate + ADP + phosphate + H(+). Its pathway is purine metabolism; IMP biosynthesis via de novo pathway; 5-amino-1-(5-phospho-D-ribosyl)imidazole from N(2)-formyl-N(1)-(5-phospho-D-ribosyl)glycinamide: step 1/2. Functionally, phosphoribosylformylglycinamidine synthase involved in the purines biosynthetic pathway. Catalyzes the ATP-dependent conversion of formylglycinamide ribonucleotide (FGAR) and glutamine to yield formylglycinamidine ribonucleotide (FGAM) and glutamate. This Escherichia coli O6:K15:H31 (strain 536 / UPEC) protein is Phosphoribosylformylglycinamidine synthase.